A 323-amino-acid chain; its full sequence is Dolichyl-phosphate beta-glucosyltransferase ALG5A (323 aa).

Over 1 to 5 (MKFWR) the chain is Lumenal. The chain crosses the membrane as a helical span at residues 6-26 (FVQILFFLGVAAVGLVVAVMI). At 27–323 (ANADDTTLFD…GAWKIRDRRH (297 aa)) the chain is on the cytoplasmic side.

Belongs to the glycosyltransferase 2 family.

It localises to the endoplasmic reticulum membrane. The catalysed reaction is a di-trans,poly-cis-dolichyl phosphate + UDP-alpha-D-glucose = a di-trans,poly-cis-dolichyl beta-D-glucosyl phosphate + UDP. Its pathway is protein modification; protein glycosylation. Dolichyl-phosphate beta-glucosyltransferase involved in the glycosylation of glycoproteins through the synthesis of dolichyl beta-D-glucosyl phosphate which serves as a sugar donor for transfer of three glucose residues to the Man-9-GlcNAc-2-PP-dolichol precursor to N-glycans. The sequence is that of Dolichyl-phosphate beta-glucosyltransferase ALG5A from Trichomonas vaginalis (strain ATCC PRA-98 / G3).